The sequence spans 122 residues: Holo-[acyl-carrier-protein] synthase (122 aa).

2 residues coordinate Mg(2+): aspartate 9 and glutamate 58.

Belongs to the P-Pant transferase superfamily. AcpS family. The cofactor is Mg(2+).

Its subcellular location is the cytoplasm. The enzyme catalyses apo-[ACP] + CoA = holo-[ACP] + adenosine 3',5'-bisphosphate + H(+). In terms of biological role, transfers the 4'-phosphopantetheine moiety from coenzyme A to a Ser of acyl-carrier-protein. This Chlamydia pneumoniae (Chlamydophila pneumoniae) protein is Holo-[acyl-carrier-protein] synthase.